Reading from the N-terminus, the 180-residue chain is 6,7-dimethyl-8-ribityllumazine synthase (180 aa).

5-amino-6-(D-ribitylamino)uracil-binding positions include phenylalanine 23, 61-63 (SFE), and 85-87 (AVI). 90-91 (QT) is a binding site for (2S)-2-hydroxy-3-oxobutyl phosphate. Histidine 93 acts as the Proton donor in catalysis. Position 118 (phenylalanine 118) interacts with 5-amino-6-(D-ribitylamino)uracil. Arginine 132 lines the (2S)-2-hydroxy-3-oxobutyl phosphate pocket.

The protein belongs to the DMRL synthase family.

It catalyses the reaction (2S)-2-hydroxy-3-oxobutyl phosphate + 5-amino-6-(D-ribitylamino)uracil = 6,7-dimethyl-8-(1-D-ribityl)lumazine + phosphate + 2 H2O + H(+). It functions in the pathway cofactor biosynthesis; riboflavin biosynthesis; riboflavin from 2-hydroxy-3-oxobutyl phosphate and 5-amino-6-(D-ribitylamino)uracil: step 1/2. Functionally, catalyzes the formation of 6,7-dimethyl-8-ribityllumazine by condensation of 5-amino-6-(D-ribitylamino)uracil with 3,4-dihydroxy-2-butanone 4-phosphate. This is the penultimate step in the biosynthesis of riboflavin. This chain is 6,7-dimethyl-8-ribityllumazine synthase, found in Gloeobacter violaceus (strain ATCC 29082 / PCC 7421).